Consider the following 126-residue polypeptide: Large ribosomal subunit protein bL12 (126 aa).

The protein belongs to the bacterial ribosomal protein bL12 family. Homodimer. Part of the ribosomal stalk of the 50S ribosomal subunit. Forms a multimeric L10(L12)X complex, where L10 forms an elongated spine to which 2 to 4 L12 dimers bind in a sequential fashion. Binds GTP-bound translation factors.

In terms of biological role, forms part of the ribosomal stalk which helps the ribosome interact with GTP-bound translation factors. Is thus essential for accurate translation. The polypeptide is Large ribosomal subunit protein bL12 (Bifidobacterium longum (strain DJO10A)).